Here is a 249-residue protein sequence, read N- to C-terminus: Eukaryotic translation initiation factor 3 subunit K (249 aa).

A PCI domain is found at 46–222 (FDCYANLALL…VKVPTNKENE (177 aa)).

It belongs to the eIF-3 subunit K family. In terms of assembly, component of the eukaryotic translation initiation factor 3 (eIF-3) complex.

It localises to the cytoplasm. Component of the eukaryotic translation initiation factor 3 (eIF-3) complex, which is involved in protein synthesis of a specialized repertoire of mRNAs and, together with other initiation factors, stimulates binding of mRNA and methionyl-tRNAi to the 40S ribosome. The eIF-3 complex specifically targets and initiates translation of a subset of mRNAs involved in cell proliferation. This chain is Eukaryotic translation initiation factor 3 subunit K, found in Neosartorya fischeri (strain ATCC 1020 / DSM 3700 / CBS 544.65 / FGSC A1164 / JCM 1740 / NRRL 181 / WB 181) (Aspergillus fischerianus).